We begin with the raw amino-acid sequence, 203 residues long: Glycerol-3-phosphate acyltransferase (203 aa).

5 consecutive transmembrane segments (helical) span residues 12–32 (ATLL…GLIL), 66–86 (TLLL…LWGV), 88–108 (AGIA…WLSF), 118–138 (IGVL…IWLA), and 159–179 (IALY…MTVI).

It belongs to the PlsY family. Probably interacts with PlsX.

The protein localises to the cell inner membrane. The enzyme catalyses an acyl phosphate + sn-glycerol 3-phosphate = a 1-acyl-sn-glycero-3-phosphate + phosphate. The protein operates within lipid metabolism; phospholipid metabolism. In terms of biological role, catalyzes the transfer of an acyl group from acyl-phosphate (acyl-PO(4)) to glycerol-3-phosphate (G3P) to form lysophosphatidic acid (LPA). This enzyme utilizes acyl-phosphate as fatty acyl donor, but not acyl-CoA or acyl-ACP. In Sinorhizobium fredii (strain NBRC 101917 / NGR234), this protein is Glycerol-3-phosphate acyltransferase.